The following is a 95-amino-acid chain: Probable FAD-linked sulfhydryl oxidase OPG072 (95 aa).

Over 1–8 (MNPKHWGR) the chain is Intravirion. Residues 1 to 95 (MNPKHWGRAV…AIDVSKVKPL (95 aa)) form the ERV/ALR sulfhydryl oxidase domain. The helical transmembrane segment at 9 to 25 (AVWTIIFIVLSQAGLDG) threads the bilayer. The Virion surface segment spans residues 26-95 (NIEACKRKLY…AIDVSKVKPL (70 aa)). An intrachain disulfide couples Cys-43 to Cys-46.

It belongs to the orthopoxvirus OPG072 family. In terms of assembly, interacts with OPG128; this interaction involves formation of a transient disulfide-bonded intermediate, allowing disulfide bond transfer. Requires FAD as cofactor.

The protein localises to the virion membrane. Its subcellular location is the host cytoplasm. The enzyme catalyses 2 R'C(R)SH + O2 = R'C(R)S-S(R)CR' + H2O2. FAD-dependent sulfhydryl oxidase that catalyzes disulfide bond formation. The complete pathway for formation of disulfide bonds in intracellular virion membrane proteins sequentially involves thiol-disulfide transfer between OPG072, OPG128 and OPG088. The sequence is that of Probable FAD-linked sulfhydryl oxidase OPG072 (OPG072) from Monkeypox virus.